Reading from the N-terminus, the 148-residue chain is Protein PLANT CADMIUM RESISTANCE 9 (148 aa).

Residues 59 to 78 (LAGLMVVAMSSIGCGWYYAS) traverse the membrane as a helical segment.

It belongs to the cornifelin family.

The protein localises to the membrane. May be involved in cadmium resistance. The sequence is that of Protein PLANT CADMIUM RESISTANCE 9 (PCR9) from Arabidopsis thaliana (Mouse-ear cress).